Here is a 263-residue protein sequence, read N- to C-terminus: 3'-5' ssDNA/RNA exonuclease TatD (263 aa).

Positions 91, 127, and 152 each coordinate a divalent metal cation.

This sequence belongs to the metallo-dependent hydrolases superfamily. TatD-type hydrolase family. TatD subfamily. In terms of assembly, monomer. Requires Mg(2+) as cofactor.

The protein resides in the cytoplasm. 3'-5' exonuclease that prefers single-stranded DNA and RNA. May play a role in the H(2)O(2)-induced DNA damage repair. The polypeptide is 3'-5' ssDNA/RNA exonuclease TatD (Cronobacter sakazakii (strain ATCC BAA-894) (Enterobacter sakazakii)).